Consider the following 248-residue polypeptide: Chitin deacetylase (248 aa).

A signal peptide spans 1-26; that stretch reads MHFSTLFGAAATAALAGSTNASPLAR. Disulfide bonds link Cys38–Cys237 and Cys148–Cys152. Residues 42–232 enclose the NodB homology domain; it reads GLVALTYDDG…TLKSKGYRAV (191 aa). Asp49 acts as the Proton acceptor in catalysis. Residue Asp49 coordinates acetate. 3 residues coordinate Co(2+): Asp50, His104, and His108. Acetate is bound at residue Tyr145. The active-site Proton donor is the His206.

The protein belongs to the polysaccharide deacetylase family. In terms of assembly, monomer. The cofactor is Co(2+). N-glycosylated.

It is found in the secreted. It carries out the reaction [(1-&gt;4)-N-acetyl-beta-D-glucosaminyl](n) + n H2O = chitosan + n acetate. Its function is as follows. Hydrolyzes the N-acetamido groups of N-acetyl-D-glucosamine polymers in chitin to form chitosan and acetate. May play a role in evasion of the host immune response; plant chitinases liberate chitin molecules from the fungal cell wall which act as elicitors of the plant immune response, deacetylation of the liberated chitin neutralizes elicitor activity. The chain is Chitin deacetylase from Colletotrichum lindemuthianum (Bean anthracnose fungus).